Consider the following 274-residue polypeptide: Exosome complex component RRP40 (274 aa).

Ala-2 is modified (N-acetylalanine). Lys-150 is covalently cross-linked (Glycyl lysine isopeptide (Lys-Gly) (interchain with G-Cter in SUMO2)).

It belongs to the RRP40 family. As to quaternary structure, component of the RNA exosome core complex (Exo-9), composed of EXOSC1, EXOSC2, EXOSC3, EXOSC4, EXOSC5, EXOSC6, EXOSC7, EXOSC8 and EXOSC9; within the complex interacts with EXOSC5 and EXOSC9. The catalytically inactive RNA exosome core complex (Exo-9) associates with the catalytic subunit EXOSC10/RRP6. Exo-9 may associate with DIS3 to form the nucleolar exosome complex, or DIS3L to form the cytoplasmic exosome complex. Exo-9 is formed by a hexameric base ring consisting of the heterodimers EXOSC4-EXOSC9, EXOSC5-EXOSC8 and EXOSC6-EXOSC7, and a cap ring consisting of EXOSC1, EXOSC2 and EXOSC3. The RNA exosome complex associates with cofactors C1D/RRP47, MPHOSPH6/MPP6 and MTREX/MTR4. Interacts with MPHOSPH6/MPP6; the interaction is direct. Interacts with GTPBP1. Interacts with ZC3HAV1. Interacts with DDX17 only in the presence of ZC3HAV1 in an RNA-independent manner. Interacts with DHX36; this interaction occurs in a RNase-insensitive manner. Interacts with HBS1L isoform 2.

Its subcellular location is the cytoplasm. It localises to the nucleus. It is found in the nucleolus. Its function is as follows. Non-catalytic component of the RNA exosome complex which has 3'-&gt;5' exoribonuclease activity and participates in a multitude of cellular RNA processing and degradation events. In the nucleus, the RNA exosome complex is involved in proper maturation of stable RNA species such as rRNA, snRNA and snoRNA, in the elimination of RNA processing by-products and non-coding 'pervasive' transcripts, such as antisense RNA species and promoter-upstream transcripts (PROMPTs), and of mRNAs with processing defects, thereby limiting or excluding their export to the cytoplasm. The RNA exosome may be involved in Ig class switch recombination (CSR) and/or Ig variable region somatic hypermutation (SHM) by targeting AICDA deamination activity to transcribed dsDNA substrates. In the cytoplasm, the RNA exosome complex is involved in general mRNA turnover and specifically degrades inherently unstable mRNAs containing AU-rich elements (AREs) within their 3' untranslated regions, and in RNA surveillance pathways, preventing translation of aberrant mRNAs. It seems to be involved in degradation of histone mRNA. The catalytic inactive RNA exosome core complex of 9 subunits (Exo-9) is proposed to play a pivotal role in the binding and presentation of RNA for ribonucleolysis, and to serve as a scaffold for the association with catalytic subunits and accessory proteins or complexes. EXOSC3 as peripheral part of the Exo-9 complex stabilizes the hexameric ring of RNase PH-domain subunits through contacts with EXOSC9 and EXOSC5. This Mus musculus (Mouse) protein is Exosome complex component RRP40 (Exosc3).